The sequence spans 212 residues: Imidazole glycerol phosphate synthase subunit HisH (212 aa).

In terms of domain architecture, Glutamine amidotransferase type-1 spans 3–212 (DIAIVDYGMG…LGNFVRWKPV (210 aa)). Cys82 acts as the Nucleophile in catalysis. Catalysis depends on residues His191 and Glu193.

As to quaternary structure, heterodimer of HisH and HisF.

Its subcellular location is the cytoplasm. It catalyses the reaction 5-[(5-phospho-1-deoxy-D-ribulos-1-ylimino)methylamino]-1-(5-phospho-beta-D-ribosyl)imidazole-4-carboxamide + L-glutamine = D-erythro-1-(imidazol-4-yl)glycerol 3-phosphate + 5-amino-1-(5-phospho-beta-D-ribosyl)imidazole-4-carboxamide + L-glutamate + H(+). The enzyme catalyses L-glutamine + H2O = L-glutamate + NH4(+). It functions in the pathway amino-acid biosynthesis; L-histidine biosynthesis; L-histidine from 5-phospho-alpha-D-ribose 1-diphosphate: step 5/9. IGPS catalyzes the conversion of PRFAR and glutamine to IGP, AICAR and glutamate. The HisH subunit catalyzes the hydrolysis of glutamine to glutamate and ammonia as part of the synthesis of IGP and AICAR. The resulting ammonia molecule is channeled to the active site of HisF. This is Imidazole glycerol phosphate synthase subunit HisH from Nitrosospira multiformis (strain ATCC 25196 / NCIMB 11849 / C 71).